The sequence spans 425 residues: MGVSRVLYVEGGTPLKGELRVYPAKNAALPILAASLLTPEPITLVEVPRLRDVEVMLELLAHLGTQYAWEGRTLHLQTPEIKSTHAPYELVGQMRASFIVWGALLARAGEGHVSMPGGCAFGFRPVDQHIKALEALGAEVWEEDGTFHARRTRPLSGRVVFDLPTVGGTEQAMLAVALGGEATLVQAAVEPEVVDLGHFLALLGAEVEGLGSPIVRIKGAPRLKGGTYRIIPDRIEAGTYLLAAAATRGSLTLEGVRPDHLDALLDKLWRSGHRLEVGEDWIRFRATPDPAPFHVEAREYPGFPTDLQPIATAYLATVPGQSTVVDRIYPDRFTHVGELARMGAELYLRDRILTVQGRRLHGAQVKALDIRAGGALVVAALSAEGASEIEGVYFLERGYEHLTERLQALGARVHLRESPVALAAD.

Residue 25 to 26 participates in phosphoenolpyruvate binding; that stretch reads KN. Arg-95 serves as a coordination point for UDP-N-acetyl-alpha-D-glucosamine. Cys-119 serves as the catalytic Proton donor. Cys-119 carries the post-translational modification 2-(S-cysteinyl)pyruvic acid O-phosphothioketal. UDP-N-acetyl-alpha-D-glucosamine is bound by residues 124–128, Asp-306, and Ile-328; that span reads RPVDQ.

The protein belongs to the EPSP synthase family. MurA subfamily.

It localises to the cytoplasm. It catalyses the reaction phosphoenolpyruvate + UDP-N-acetyl-alpha-D-glucosamine = UDP-N-acetyl-3-O-(1-carboxyvinyl)-alpha-D-glucosamine + phosphate. The protein operates within cell wall biogenesis; peptidoglycan biosynthesis. In terms of biological role, cell wall formation. Adds enolpyruvyl to UDP-N-acetylglucosamine. This Thermus thermophilus (strain ATCC BAA-163 / DSM 7039 / HB27) protein is UDP-N-acetylglucosamine 1-carboxyvinyltransferase.